A 410-amino-acid chain; its full sequence is uncharacterized protein (410 aa).

The next 11 membrane-spanning stretches (helical) occupy residues 14–34, 48–68, 82–102, 140–160, 164–184, 212–232, 251–271, 279–299, 303–323, 342–362, and 371–391; these read IIIG…FLAI, GLVI…GGYI, IFGW…WVFF, YAAI…FGSS, TPFL…ALQF, YLFT…SQFS, LYGL…FPIV, PLCS…IFTV, VPSI…LFSM, GAIG…GICI, and IYIF…LAFA.

The protein belongs to the major facilitator superfamily. TCR/Tet family.

Its subcellular location is the cell membrane. This is an uncharacterized protein from Bacillus subtilis (strain 168).